A 254-amino-acid chain; its full sequence is Large ribosomal subunit protein uL4 (254 aa).

Belongs to the universal ribosomal protein uL4 family. As to quaternary structure, part of the 50S ribosomal subunit.

One of the primary rRNA binding proteins, this protein initially binds near the 5'-end of the 23S rRNA. It is important during the early stages of 50S assembly. It makes multiple contacts with different domains of the 23S rRNA in the assembled 50S subunit and ribosome. In terms of biological role, forms part of the polypeptide exit tunnel. The sequence is that of Large ribosomal subunit protein uL4 from Methanothermobacter thermautotrophicus (strain ATCC 29096 / DSM 1053 / JCM 10044 / NBRC 100330 / Delta H) (Methanobacterium thermoautotrophicum).